The primary structure comprises 292 residues: MEMO1 family protein PF1638 (292 aa).

This sequence belongs to the MEMO1 family.

The sequence is that of MEMO1 family protein PF1638 from Pyrococcus furiosus (strain ATCC 43587 / DSM 3638 / JCM 8422 / Vc1).